We begin with the raw amino-acid sequence, 195 residues long: Inhibitor of glycogen debranching 1 (195 aa).

Residues 1–18 (MTDPHLNTPQVSTSPTFE) are compositionally biased toward polar residues. Positions 1–101 (MTDPHLNTPQ…ERRSSGPMDF (101 aa)) are disordered. S64 is modified (phosphoserine). The residue at position 65 (T65) is a Phosphothreonine. Residues 75 to 95 (EQARERESSIGEHAPGAERRS) are compositionally biased toward basic and acidic residues. A phosphoserine mark is found at S95 and S96. T132 is subject to Phosphothreonine. The interval 146 to 175 (NSYLDNNSNGNSARVPHGSPPQLGTRRKSS) is disordered. The span at 148–157 (YLDNNSNGNS) shows a compositional bias: polar residues. At S164 the chain carries Phosphoserine.

In terms of assembly, interacts with GDB1.

The protein resides in the cytoplasm. Its function is as follows. Acts as an inhibitor of GDB1, enhancing the ability of cells to store glucose as glycogen. The polypeptide is Inhibitor of glycogen debranching 1 (IGD1) (Saccharomyces cerevisiae (strain ATCC 204508 / S288c) (Baker's yeast)).